The chain runs to 313 residues: Probable WRKY transcription factor 41 (313 aa).

The segment at residues 135–203 (GLEGPHDDIF…YRGTHTCSQG (69 aa)) is a DNA-binding region (WRKY).

The protein belongs to the WRKY group III family.

The protein resides in the nucleus. Its function is as follows. Transcription factor. Interacts specifically with the W box (5'-(T)TGAC[CT]-3'), a frequently occurring elicitor-responsive cis-acting element. This chain is Probable WRKY transcription factor 41 (WRKY41), found in Arabidopsis thaliana (Mouse-ear cress).